The primary structure comprises 474 residues: Cbb3-type cytochrome c oxidase subunit CcoN1 (474 aa).

The Cytoplasmic portion of the chain corresponds to 1–16 (MNTATSTAYSYKVVRQ). A helical transmembrane segment spans residues 17 to 37 (FAIMTVVWGIVGMGLGVFIAA). Residues 38–60 (QLAWPFLNFDLPWTSFGRLRPLH) lie on the Periplasmic side of the membrane. Residue histidine 60 coordinates heme b. Residues 61-81 (TNAVIFAFGGCALFATSYYSV) traverse the membrane as a helical segment. Topologically, residues 82–96 (QRTCQTTLFAPKLAA) are cytoplasmic. Residues 97–117 (FTFWGWQLVILLAAISLPLGF) form a helical membrane-spanning segment. The Periplasmic portion of the chain corresponds to 118–129 (TSSKEYAELEWP). The helical transmembrane segment at 130–150 (IDILITIVWVAYAVVFFGTLA) threads the bilayer. The Cytoplasmic portion of the chain corresponds to 151-156 (KRKVKH). The helical transmembrane segment at 157 to 177 (IYVGNWFFGAFILTVAILHVV) threads the bilayer. The Periplasmic segment spans residues 178–205 (NNLEIPVTAMKSYSLYAGATDAMVQWWY). A helical membrane pass occupies residues 206-226 (GHNAVGFFLTAGFLGIMYYFV). Cu cation is bound at residue histidine 207. Topologically, residues 227 to 238 (PKQAERPVYSYR) are cytoplasmic. The helical transmembrane segment at 239-259 (LSIVHFWALITVYIWAGPHHL) threads the bilayer. Cu cation contacts are provided by histidine 257 and histidine 258. Topologically, residues 260 to 270 (HYTALPDWAQS) are periplasmic. Residues 271-291 (LGMVMSLILLAPSWGGMINGM) traverse the membrane as a helical segment. Residues 292-308 (MTLSGAWHKLRSDPILR) are Cytoplasmic-facing. The chain crosses the membrane as a helical span at residues 309–329 (FLVVSLAFYGMSTFEGPMMAI). The Periplasmic portion of the chain corresponds to 330 to 345 (KTVNALSHYTDWTIGH). Histidine 345 and histidine 347 together coordinate heme b. A helical membrane pass occupies residues 346-366 (VHAGALGWVAMVSIGALYHLV). At 367–384 (PKVFGREQMHSIGLINTH) the chain is on the cytoplasmic side. A helical membrane pass occupies residues 385–405 (FWLATIGTVLYIASMWVNGIA). Residues 406-432 (QGLMWRAINDDGTLTYSFVESLEASHP) are Periplasmic-facing. Residues 433-453 (GFVVRMIGGAIFFAGMLVMAY) form a helical membrane-spanning segment. The Cytoplasmic portion of the chain corresponds to 454–474 (NTWRTVQAAKPAEYDAAAQIA).

Belongs to the heme-copper respiratory oxidase family. Component of the cbb3-type cytochrome c oxidase at least composed of CcoN, CcoO, CcoQ and CcoP. The cofactor is Cu(2+). Requires heme b as cofactor.

Its subcellular location is the cell inner membrane. The catalysed reaction is 4 Fe(II)-[cytochrome c] + O2 + 8 H(+)(in) = 4 Fe(III)-[cytochrome c] + 2 H2O + 4 H(+)(out). It functions in the pathway energy metabolism; oxidative phosphorylation. Functionally, cbb3-type cytochrome c oxidase is the component of the respiratory chain that catalyzes the reduction of oxygen to water. Subunits CcoN and CcoO form the functional core of the enzyme complex. Subunits CcoP and CcoQ may optionally bind to the core. CcoN is the catalytic subunit of the enzyme. Electrons originating in cytochrome c or a quinol are transferred to the bimetallic center formed by a high-spin heme and copper B. The complex also functions as a proton pump. The sequence is that of Cbb3-type cytochrome c oxidase subunit CcoN1 from Stutzerimonas stutzeri (Pseudomonas stutzeri).